The sequence spans 451 residues: Tubulin gamma-2 chain (451 aa).

The residue at position 131 (serine 131) is a Phosphoserine; by BRSK1. Position 142 to 148 (142 to 148 (AGGTGSG)) interacts with GTP.

It belongs to the tubulin family. In terms of assembly, component of the gamma-tubulin ring complex (gTuRC) consisting of TUBGCP2, TUBGCP3, TUBGCP4, TUBGCP5 and TUBGCP6 and gamma-tubulin TUBG1 or TUBG2. TUBGCP2, TUBGCP3, TUBGCP4, TUBGCP5 and TUBGCP6 assemble in a 5:5:2:1:1 stoichiometry; each is associated with a gamma-tubulin, thereby arranging 14 gamma-tubulins in a helical manner. Gamma-tubulin at the first position is blocked by TUBGCP3 at the last position, allowing 13 protafilaments to grow into a microtubule. Interacts with alpha-beta tubulin heterodimers; the interaction allows microtubules to nucleate from the gTuRC. Phosphorylation at Ser-131 by BRSK1 regulates centrosome duplication, possibly by mediating relocation of gamma-tubulin and its associated proteins from the cytoplasm to the centrosome.

The protein localises to the cytoplasm. The protein resides in the cytoskeleton. It is found in the microtubule organizing center. It localises to the centrosome. In terms of biological role, tubulin is the major constituent of microtubules, protein filaments consisting of alpha- and beta-tubulin heterodimers. Gamma-tubulin is a key component of the gamma-tubulin ring complex (gTuRC) which mediates microtubule nucleation. The gTuRC regulates the minus-end nucleation of alpha-beta tubulin heterodimers that grow into microtubule protafilaments, a critical step in centrosome duplication and spindle formation. This Mus musculus (Mouse) protein is Tubulin gamma-2 chain (Tubg2).